The chain runs to 248 residues: Triosephosphate isomerase (248 aa).

Substrate-binding residues include Asn10 and Lys12. Residue His95 is the Electrophile of the active site. Glu165 functions as the Proton acceptor in the catalytic mechanism.

This sequence belongs to the triosephosphate isomerase family. As to quaternary structure, homodimer.

It is found in the cytoplasm. The catalysed reaction is D-glyceraldehyde 3-phosphate = dihydroxyacetone phosphate. It functions in the pathway carbohydrate biosynthesis; gluconeogenesis. The protein operates within carbohydrate degradation; glycolysis; D-glyceraldehyde 3-phosphate from glycerone phosphate: step 1/1. This is Triosephosphate isomerase (TPI1) from Candida albicans (strain SC5314 / ATCC MYA-2876) (Yeast).